Consider the following 512-residue polypeptide: Plastidal glycolate/glycerate translocator 1, chloroplastic (512 aa).

The N-terminal 76 residues, 1 to 76 (MATLLATPIF…MNFERKLSVQ (76 aa)), are a transit peptide targeting the chloroplast. N-acetylalanine is present on alanine 77. 12 helical membrane-spanning segments follow: residues 93–113 (VIAI…DYFL), 127–147 (ALFG…VVPA), 160–180 (FLFI…VLPL), 195–215 (YIVA…AIAV), 238–258 (LELW…LFYP), 270–290 (PFLL…PSSI), 293–313 (VFHP…AFGY), 336–356 (AGDI…FSMF), 367–387 (AEIF…TALV), 398–418 (TVSI…VSLF), 425–445 (LTAA…QVVL), and 480–500 (LPFC…LCSV).

It belongs to the CidB/LrgB family. In terms of tissue distribution, expressed in leaves, stems and flowers, but not in roots.

The protein resides in the plastid. The protein localises to the chloroplast membrane. In terms of biological role, glycolate/glycerate transporter required for photorespiration. The sequence is that of Plastidal glycolate/glycerate translocator 1, chloroplastic (PLGG1) from Arabidopsis thaliana (Mouse-ear cress).